The chain runs to 423 residues: Probable sodium/metabolite cotransporter BASS3, chloroplastic (423 aa).

The N-terminal 45 residues, 1–45 (MAAAVAASSSSSSSSCAAVGVATASHPHRHRQARFVVSPPAPASP), are a transit peptide targeting the chloroplast. The next 9 membrane-spanning stretches (helical) occupy residues 106 to 126 (ALLP…PATF), 138 to 158 (LGGI…ALAF), 165 to 187 (TIGY…RAFG), 192 to 214 (FFAG…ASFL), 231 to 251 (ISSV…VVPV), 254 to 274 (IAMA…GLLL), 287 to 307 (PVMP…PLAI), 318 to 338 (FLLL…GYWI), and 380 to 400 (VPAA…ASYW).

It belongs to the bile acid:sodium symporter (BASS) (TC 2.A.28) family.

The protein localises to the membrane. It is found in the plastid. It localises to the chloroplast envelope. May function as sodium-coupled metabolite transporter across the chloroplast envelope. The protein is Probable sodium/metabolite cotransporter BASS3, chloroplastic (BASS3) of Oryza sativa subsp. japonica (Rice).